Here is a 440-residue protein sequence, read N- to C-terminus: Cyclic dipeptide prenyltransferase (440 aa).

Residues 1–33 (MDGEMTASPPDISACDTSAVDEQTGQSGQSQAP) form a disordered region. Residues 20-32 (VDEQTGQSGQSQA) show a composition bias toward polar residues. Residues threonine 108 and glutamate 116 each coordinate substrate. Residues arginine 129, lysine 219, and tyrosine 221 each contribute to the dimethylallyl diphosphate site. Residue phenylalanine 223 coordinates substrate. Positions 286, 288, 366, 431, and 435 each coordinate dimethylallyl diphosphate.

It belongs to the tryptophan dimethylallyltransferase family.

The catalysed reaction is harmol + dimethylallyl diphosphate = 6-(3-dimethylallyl)harmol + diphosphate. The enzyme catalyses an N-terminal L-tryptophanyl-L-alpha-aminoacyl-[peptide] + H2O = an N-terminal L-alpha-aminoacyl-[peptide] + L-tryptophan. It catalyses the reaction (R)-benzodiazepinedione + dimethylallyl diphosphate = (2S,3R,11R)-aszonalenin + diphosphate. It carries out the reaction (S)-benzodiazepinedione + dimethylallyl diphosphate = (2S,3R,11S)-aszonalenin + diphosphate. Prenyltransferase that catalyzes reverse prenylation at position N-1 of tryptophan-containing cyclic dipeptides. Accepts only dimethylallyl diphosphate (DMAPP) as the prenyl donor but shows broad substrate specificities toward its aromatic substrates. Also shows tryptophan aminopeptidase activity with preference for linear peptides containing a tryptophanyl moiety at the N-terminus. This chain is Cyclic dipeptide prenyltransferase, found in Aspergillus fumigatus (Neosartorya fumigata).